A 297-amino-acid polypeptide reads, in one-letter code: Adrenocorticotropic hormone receptor (297 aa).

Residues 1–23 (MKHIINSYENINNTARNNSDCPR) are Extracellular-facing. Residues Asn12 and Asn17 are each glycosylated (N-linked (GlcNAc...) asparagine). 2 disulfides stabilise this stretch: Cys21–Cys253 and Cys245–Cys251. The chain crosses the membrane as a helical span at residues 24–49 (VVLPEEIFFTISIVGVLENLIVLLAV). The Cytoplasmic segment spans residues 50-58 (FKNKNLQAP). Residues 59 to 79 (MYFFICSLAISDMLGSLYKIL) form a helical membrane-spanning segment. Over 80–104 (ENILIILRNMGYLKPRGSFETTADD) the chain is Extracellular. Residues 105-126 (IIDSLFVLSLLGSIFSLSVIAA) form a helical membrane-spanning segment. The Cytoplasmic segment spans residues 127 to 147 (DRYITIFHALRYHSIVTMRRT). A helical membrane pass occupies residues 148 to 168 (VVVLTVIWTFCTGTGITMVIF). Residues 169–180 (SHHVPTVITFTS) are Extracellular-facing. The helical transmembrane segment at 181 to 199 (LFPLMLVFILCLYVHMFLL) threads the bilayer. The Cytoplasmic segment spans residues 200–217 (ARSHTRKISTLPRANMKG). Residues 218–244 (AITLTILLGVFIFCWAPFVLHVLLMTF) traverse the membrane as a helical segment. Topologically, residues 245-256 (CPSNPYCACYMS) are extracellular. The helical transmembrane segment at 257–278 (LFQVNGMLIMCNAVIDPFIYAF) threads the bilayer. At 279-297 (RSPELRDAFKKMIFCSRYW) the chain is on the cytoplasmic side. Cys293 carries S-palmitoyl cysteine lipidation.

The protein belongs to the G-protein coupled receptor 1 family. In terms of assembly, homodimer. Interacts with corticotropin (ACTH). Interacts with MRAP; this interaction targets MC2R to the plasma membrane. Interacts with MRAP2; competing with MRAP for binding to MC2R and impairing the binding of corticotropin (ACTH). In terms of processing, ubiquitinated by MGRN1 that may be involved in post-endocytic trafficking and/or degradation of internalized receptor. In terms of tissue distribution, melanocytes and corticoadrenal tissue.

The protein resides in the cell membrane. Hormone receptor primarily expressed in adrenal cortex that plays a key role in regulating adrenocortical function. Upon corticotropin (ACTH) binding, facilitates the release of adrenal glucocorticoids, including cortisol and corticosterone. In addition, MC2R is required for fetal and neonatal adrenal gland development. Mechanistically, activates adenylate cyclase (cAMP), the MAPK cascade as well as the cAMP-dependent protein kinase A pathway leading to steroidogenic factor 1/NR5A1-mediated transcriptional activation. The polypeptide is Adrenocorticotropic hormone receptor (MC2R) (Homo sapiens (Human)).